A 1297-amino-acid chain; its full sequence is Phosphoribosylformylglycinamidine synthase (1297 aa).

Positions 303 to 329 are disordered; that stretch reads ISPFPGAATGSGGEIRDEGATGRGAKP. 308-319 lines the ATP pocket; sequence GAATGSGGEIRD. The Mg(2+) site is built by Asp680, Glu719, Asn723, and Asp887. Residue Ser889 coordinates ATP. The Glutamine amidotransferase type-1 domain occupies 1045 to 1297; it reads IAILREQGVN…RLFRNARMVF (253 aa). Cys1138 serves as the catalytic Nucleophile. Residues His1263 and Glu1265 contribute to the active site.

In the N-terminal section; belongs to the FGAMS family. Monomer.

Its subcellular location is the cytoplasm. The enzyme catalyses N(2)-formyl-N(1)-(5-phospho-beta-D-ribosyl)glycinamide + L-glutamine + ATP + H2O = 2-formamido-N(1)-(5-O-phospho-beta-D-ribosyl)acetamidine + L-glutamate + ADP + phosphate + H(+). It functions in the pathway purine metabolism; IMP biosynthesis via de novo pathway; 5-amino-1-(5-phospho-D-ribosyl)imidazole from N(2)-formyl-N(1)-(5-phospho-D-ribosyl)glycinamide: step 1/2. Phosphoribosylformylglycinamidine synthase involved in the purines biosynthetic pathway. Catalyzes the ATP-dependent conversion of formylglycinamide ribonucleotide (FGAR) and glutamine to yield formylglycinamidine ribonucleotide (FGAM) and glutamate. This is Phosphoribosylformylglycinamidine synthase from Haemophilus influenzae (strain 86-028NP).